A 489-amino-acid polypeptide reads, in one-letter code: GTPase Der (489 aa).

2 EngA-type G domains span residues 30 to 199 (PVVS…KDKP) and 227 to 403 (FRLA…SRSH). Residues 36 to 43 (GRQNVGKS), 85 to 89 (DTPGL), 151 to 154 (NKAD), 233 to 240 (GKPNSGKS), 280 to 284 (DTAGI), and 345 to 348 (NKWD) each bind GTP. Residues 404–488 (RKVSTSELNK…PIRLEFRSDR (85 aa)) enclose the KH-like domain.

The protein belongs to the TRAFAC class TrmE-Era-EngA-EngB-Septin-like GTPase superfamily. EngA (Der) GTPase family. In terms of assembly, associates with the 50S ribosomal subunit.

GTPase that plays an essential role in the late steps of ribosome biogenesis. The protein is GTPase Der of Leptospira interrogans serogroup Icterohaemorrhagiae serovar copenhageni (strain Fiocruz L1-130).